Reading from the N-terminus, the 465-residue chain is Zinc finger and BTB domain-containing protein 32 (465 aa).

The BTB domain occupies 29 to 87 (CDTLITVGGLEFPAHSLVLAGASPRLGCRGRWALVEDISPSTFAQILTFVYGESIELQP). Disordered stretches follow at residues 111 to 179 (RAQK…EMAG) and 285 to 310 (QNQL…PWQI). Basic and acidic residues-rich tracts occupy residues 123 to 139 (PGLK…RGSE) and 147 to 176 (EKQK…ERPE). 3 C2H2-type zinc fingers span residues 350–372 (YSCS…YRVH), 378–400 (FSCS…LRTH), and 405–427 (YRCP…MRGH).

Belongs to the krueppel C2H2-type zinc-finger protein family. As to quaternary structure, homodimer (via PTB domain). Interacts with the N-terminal of FANCC. Interacts with ZBTB16. Interacts with GATA3. In terms of tissue distribution, isoform 1 is testis-specific and is not expressed in lymphoid organs such as thymus or spleen. Isoform 2 is expressed in both B- and T-lymphoid cells.

It localises to the nucleus. Functionally, DNA-binding protein that binds to the to a 5'-TGTACAGTGT-3' core sequence. May function as a transcriptional transactivator and transcriptional repressor. Probably exerts its repressor effect by preventing GATA3 from binding to DNA. May play a role in regulating the differentiation and activation of helper T-cells. The polypeptide is Zinc finger and BTB domain-containing protein 32 (Zbtb32) (Mus musculus (Mouse)).